An 88-amino-acid chain; its full sequence is MATSPQTDPQHDDRPLPQDFETALAELETLVAAMEDGSLPLEQSLAAYRRGVELTRVCQERLAQAEQQVKVLEDGLLRPLDPRALDDE.

The protein belongs to the XseB family. As to quaternary structure, heterooligomer composed of large and small subunits.

The protein resides in the cytoplasm. It catalyses the reaction Exonucleolytic cleavage in either 5'- to 3'- or 3'- to 5'-direction to yield nucleoside 5'-phosphates.. Functionally, bidirectionally degrades single-stranded DNA into large acid-insoluble oligonucleotides, which are then degraded further into small acid-soluble oligonucleotides. This chain is Exodeoxyribonuclease 7 small subunit, found in Bordetella petrii (strain ATCC BAA-461 / DSM 12804 / CCUG 43448).